The sequence spans 234 residues: Thrombin-like enzyme contortrixobin (234 aa).

The Peptidase S1 domain occupies 1–225 (VVGGDECNIN…YNDWIQSIIA (225 aa)). 6 disulfide bridges follow: cysteine 7-cysteine 139, cysteine 26-cysteine 42, cysteine 74-cysteine 232, cysteine 118-cysteine 186, cysteine 150-cysteine 165, and cysteine 176-cysteine 201. Catalysis depends on charge relay system residues histidine 41 and aspartate 86. Catalysis depends on serine 180, which acts as the Charge relay system.

In terms of assembly, monomer. Not glycosylated. As to expression, expressed by the venom gland.

The protein localises to the secreted. Strongly inhibited by diisopropylfluorophosphate (DFP) and to a lesser extent by PMSF, benzamidine and 4,6-diamidino-2-phenylindole. Low inhibition by hirudin. In terms of biological role, thrombin-like snake venom serine protease that cleaves beta chain of fibrinogen (FGB), releasing fibrinopeptide B. Has a coagulant activity activating blood coagulation factors V (F5) and XIII (F13A1). The chain is Thrombin-like enzyme contortrixobin from Agkistrodon contortrix contortrix (Southern copperhead).